Here is a 273-residue protein sequence, read N- to C-terminus: Oxidation resistance protein 1 (273 aa).

Residue Met1 is modified to N-acetylmethionine. A compositionally biased stretch (low complexity) spans 18-33 (TDSSDSTAYTTASESS). Disordered stretches follow at residues 18–48 (TDSS…NKTT) and 177–197 (ISEK…GDKE). Over residues 37-48 (KDSHNPFRNKTT) the composition is skewed to basic and acidic residues. One can recognise a TLDc domain in the interval 74–273 (KLLTPEMCDE…IVALEVWRVG (200 aa)). Phosphoserine is present on Ser178.

This sequence belongs to the OXR1 family.

It is found in the mitochondrion. Functionally, involved in protection from oxidative damage. The sequence is that of Oxidation resistance protein 1 (OXR1) from Saccharomyces cerevisiae (strain ATCC 204508 / S288c) (Baker's yeast).